The following is a 476-amino-acid chain: Dermokine (476 aa).

The N-terminal stretch at 1–21 (MKFQGPLACLLLALCLGSGEA) is a signal peptide. 4 stretches are compositionally biased toward gly residues: residues 153-169 (SQGGLGGQGQGNPGGLG), 193-202 (WGQGGNGGPP), 236-259 (GSGGGSSNSGGGSGSQSGSSGSGS), and 268-298 (SSGGSSSGSSSGGSSGGSSGGSSGNSGGSRG). A disordered region spans residues 153-351 (SQGGLGGQGQ…ESGIQNSETS (199 aa)). A compositionally biased stretch (low complexity) spans 299 to 315 (DSGSESSWGSSTGSSSG). Positions 316–326 (NHGGSGGGNGH) are enriched in gly residues.

Belongs to the dermokine family. In terms of assembly, homooligomer. Seems to be able to homodimerize and homotrimerize. Post-translationally, O-glycosylated. In terms of tissue distribution, expressed in epidermis; in the spinous and granular layers and in placenta. Also found in the epithelia of the small intestine, macrophages of the lung and endothelial cells of the lung. Isoform 15 is expressed in epidermis and placenta. Isoform 1 is expressed in epidermis.

The protein resides in the secreted. Functionally, may act as a soluble regulator of keratinocyte differentiation. In Homo sapiens (Human), this protein is Dermokine (DMKN).